Here is a 497-residue protein sequence, read N- to C-terminus: Arginine/ornithine antiporter ArcD2 (497 aa).

The next 13 helical transmembrane spans lie at 8 to 28, 41 to 61, 88 to 108, 127 to 147, 160 to 180, 220 to 240, 255 to 275, 297 to 317, 354 to 374, 378 to 398, 406 to 426, 429 to 449, and 462 to 482; these read GISL…GGVF, GGVV…VLSF, FLSG…FAVL, SLTI…MLLV, IVMI…IILF, IKGS…ATMM, VIGL…PYGY, VGGW…LGAW, LLIT…VANA, FIYM…AYLF, SVKN…ALYL, WQYV…FIGA, and WLGM…LICG.

The protein belongs to the amino acid-polyamine-organocation (APC) superfamily. Basic amino acid/polyamine antiporter (APA) (TC 2.A.3.2) family.

The protein localises to the cell membrane. It catalyses the reaction L-ornithine(in) + L-arginine(out) = L-ornithine(out) + L-arginine(in). Catalyzes electroneutral exchange between L-arginine and L-ornithine. Can also efficiently translocate L-alanine. May function in vivo as a L-arginine/L-alanine exchanger in a pathway together with the arcT gene, which is found adjacent to the arcD2 gene in the ADI gene cluster. The chain is Arginine/ornithine antiporter ArcD2 from Lactococcus lactis subsp. cremoris (strain MG1363).